We begin with the raw amino-acid sequence, 379 residues long: Probable purine permease 11 (379 aa).

10 helical membrane passes run 43–63 (WVLV…SVLL), 76–96 (WMAT…LLLL), 114–134 (IVLI…LYSV), 144–164 (YSLI…FINA), 167–187 (FTAL…LIAL), 203–223 (IVGF…LSLM), 239–259 (VLEM…IGLF), 294–313 (VCSV…FSNV), 314–330 (ISTL…LVVF), and 334–354 (MSGV…SYVY).

This sequence belongs to the purine permeases (TC 2.A.7.14) family. May form a complex with the potassium channel subunit KAT1.

Its subcellular location is the membrane. This chain is Probable purine permease 11 (PUP11), found in Arabidopsis thaliana (Mouse-ear cress).